A 157-amino-acid chain; its full sequence is Mitochondrial import inner membrane translocase subunit TIM14 (157 aa).

The Mitochondrial intermembrane portion of the chain corresponds to 1–56; sequence MAPLEAPILAIPGENNTHQQQQQQFQYTGQLQKKKAAEGSIEWYFDQTINFMGDHP. A helical membrane pass occupies residues 57-74; that stretch reads VITGIGAFAVAYFAAGFI. Over 75 to 157 the chain is Mitochondrial matrix; that stretch reads KSNQPGINGK…LDKRGGMKPK (83 aa). Positions 99–157 constitute a J domain; that stretch reads EALQILNLKETNLSKLKLKEQHRKLMMANHPDKGGSSYIATKINEAKDFLDKRGGMKPK.

This sequence belongs to the TIM14 family. As to quaternary structure, heterodimer with PAM16. Component of the PAM complex, at least composed of mtHsp70, MGE1, TIM44, PAM16, PAM17 and PAM18.

It is found in the mitochondrion inner membrane. Essential component of the PAM complex, a complex required for the translocation of transit peptide-containing proteins from the inner membrane into the mitochondrial matrix in an ATP-dependent manner. In the complex, it is required to stimulate activity of mtHSP70 (SSC1). In Candida albicans (strain SC5314 / ATCC MYA-2876) (Yeast), this protein is Mitochondrial import inner membrane translocase subunit TIM14 (PAM18).